The following is a 505-amino-acid chain: Maturase K (505 aa).

It belongs to the intron maturase 2 family. MatK subfamily.

It is found in the plastid. The protein resides in the chloroplast. Its function is as follows. Usually encoded in the trnK tRNA gene intron. Probably assists in splicing its own and other chloroplast group II introns. The protein is Maturase K of Calycanthus floridus (Eastern sweetshrub).